A 400-amino-acid chain; its full sequence is ASTRA-associated protein 1 (400 aa).

4 WD repeats span residues 6–54 (SAPQ…PKLQ), 57–94 (AHKD…FEMP), 240–272 (EYQN…KVVI), and 273–312 (HSDP…KGEI).

It belongs to the WD repeat ASA1 family. In terms of assembly, component of the ASTRA chromatin remodeling machinery complex.

Its subcellular location is the nucleus. Its function is as follows. Component of the ASTRA complex involved in chromatin remodeling. The protein is ASTRA-associated protein 1 (ASA1) of Lodderomyces elongisporus (strain ATCC 11503 / CBS 2605 / JCM 1781 / NBRC 1676 / NRRL YB-4239) (Yeast).